Reading from the N-terminus, the 520-residue chain is Glutamate--cysteine ligase (520 aa).

Belongs to the glutamate--cysteine ligase type 1 family. Type 1 subfamily.

The catalysed reaction is L-cysteine + L-glutamate + ATP = gamma-L-glutamyl-L-cysteine + ADP + phosphate + H(+). It participates in sulfur metabolism; glutathione biosynthesis; glutathione from L-cysteine and L-glutamate: step 1/2. This chain is Glutamate--cysteine ligase, found in Leptospira interrogans serogroup Icterohaemorrhagiae serovar Lai (strain 56601).